We begin with the raw amino-acid sequence, 684 residues long: Glycine--tRNA ligase beta subunit (684 aa).

The protein belongs to the class-II aminoacyl-tRNA synthetase family. In terms of assembly, tetramer of two alpha and two beta subunits.

It localises to the cytoplasm. It carries out the reaction tRNA(Gly) + glycine + ATP = glycyl-tRNA(Gly) + AMP + diphosphate. This Pseudomonas savastanoi pv. phaseolicola (strain 1448A / Race 6) (Pseudomonas syringae pv. phaseolicola (strain 1448A / Race 6)) protein is Glycine--tRNA ligase beta subunit.